A 359-amino-acid polypeptide reads, in one-letter code: Probable dual-specificity RNA methyltransferase RlmN (359 aa).

Glu91 (proton acceptor) is an active-site residue. In terms of domain architecture, Radical SAM core spans 97-329; sequence QHYGHSVCVT…KKNGVNCVVR (233 aa). Cys104 and Cys340 are oxidised to a cystine. Residues Cys111, Cys115, and Cys118 each contribute to the [4Fe-4S] cluster site. Residues 163–164, Ser195, 218–220, and Asn296 each bind S-adenosyl-L-methionine; these read GE and SLH. Cys340 (S-methylcysteine intermediate) is an active-site residue.

This sequence belongs to the radical SAM superfamily. RlmN family. [4Fe-4S] cluster serves as cofactor.

The protein localises to the cytoplasm. It catalyses the reaction adenosine(2503) in 23S rRNA + 2 reduced [2Fe-2S]-[ferredoxin] + 2 S-adenosyl-L-methionine = 2-methyladenosine(2503) in 23S rRNA + 5'-deoxyadenosine + L-methionine + 2 oxidized [2Fe-2S]-[ferredoxin] + S-adenosyl-L-homocysteine. The catalysed reaction is adenosine(37) in tRNA + 2 reduced [2Fe-2S]-[ferredoxin] + 2 S-adenosyl-L-methionine = 2-methyladenosine(37) in tRNA + 5'-deoxyadenosine + L-methionine + 2 oxidized [2Fe-2S]-[ferredoxin] + S-adenosyl-L-homocysteine. In terms of biological role, specifically methylates position 2 of adenine 2503 in 23S rRNA and position 2 of adenine 37 in tRNAs. This Streptococcus pyogenes serotype M3 (strain ATCC BAA-595 / MGAS315) protein is Probable dual-specificity RNA methyltransferase RlmN.